Here is a 389-residue protein sequence, read N- to C-terminus: MALADISGYLDVLDSVRGFSYLENAREVLRSGEARCLGNPRSEPEYVKALYVIGASRIPVGDGCSHTLEELGVFDISVPGEMVFPSPLDFFERGKPTPLVRSRLQLPNGVRVWLKLEWYNPFSLSVKDRPAVEIISRLSRRVEKGSLVADATSSNFGVALSAVARLYGYRARVYLPGAAEEFGKLLPRLLGAQVIVDPEAPSTVHLLPRVMKDSKNEGFVHVNQFYNDANFEAHMRGTAREIFVQSRRGGLALRGVAGSLGTSGHMSAAAFYLQSVDPSIRAVLVQPAQGDSIPGIRRVETGMLWINMLDISYTLAEVTLEEAMEAVVEVARSDGLVIGPSGGAAVKALAKKAAEGDLEPGDYVVVVPDTGFKYLSLVQNALEGAGDSV.

Lysine 127 carries the post-translational modification N6-(pyridoxal phosphate)lysine. Pyridoxal 5'-phosphate contacts are provided by residues asparagine 155, 261 to 265 (GTSGH), and serine 341.

It belongs to the cysteine synthase/cystathionine beta-synthase family. As to quaternary structure, homodimer. It depends on pyridoxal 5'-phosphate as a cofactor.

The catalysed reaction is O-acetyl-L-serine + hydrogen sulfide = L-cysteine + acetate. It catalyses the reaction O-phospho-L-serine + hydrogen sulfide + H(+) = L-cysteine + phosphate. It carries out the reaction L-homocysteine + L-serine = L,L-cystathionine + H2O. The protein operates within amino-acid biosynthesis; L-cysteine biosynthesis; L-cysteine from L-serine: step 2/2. Functionally, cysteine synthase that can also catalyze the synthesis of S-sulfo-L-cysteine from thiosulfate and O(3)-acetyl-L-serine, as well as the sulfhydrylation of L-serine by sulfide. This Aeropyrum pernix (strain ATCC 700893 / DSM 11879 / JCM 9820 / NBRC 100138 / K1) protein is Protein CysO (cysO).